The sequence spans 231 residues: Probable intron-encoded endonuclease 1 (231 aa).

The protein belongs to the LAGLIDADG endonuclease family.

The protein resides in the mitochondrion. Functionally, endonuclease involved in mitochondrial 21S rRNA gene intron homing. The sequence is that of Probable intron-encoded endonuclease 1 from Wickerhamomyces canadensis (Yeast).